The chain runs to 218 residues: Protein-methionine-sulfoxide reductase heme-binding subunit MsrQ (218 aa).

The next 5 membrane-spanning stretches (helical) occupy residues 14–34, 60–80, 86–106, 121–141, and 155–175; these read LVHA…WQVW, LLLI…AVVI, LGLY…TLDL, PYIT…ITST, and LHML…WLVK.

The protein belongs to the MsrQ family. In terms of assembly, heterodimer of a catalytic subunit (MsrP) and a heme-binding subunit (MsrQ). FMN is required as a cofactor. Requires heme b as cofactor.

Its subcellular location is the cell inner membrane. In terms of biological role, part of the MsrPQ system that repairs oxidized periplasmic proteins containing methionine sulfoxide residues (Met-O), using respiratory chain electrons. Thus protects these proteins from oxidative-stress damage caused by reactive species of oxygen and chlorine generated by the host defense mechanisms. MsrPQ is essential for the maintenance of envelope integrity under bleach stress, rescuing a wide series of structurally unrelated periplasmic proteins from methionine oxidation. MsrQ provides electrons for reduction to the reductase catalytic subunit MsrP, using the quinone pool of the respiratory chain. This is Protein-methionine-sulfoxide reductase heme-binding subunit MsrQ from Xanthomonas axonopodis pv. citri (strain 306).